We begin with the raw amino-acid sequence, 412 residues long: Motilin receptor (412 aa).

At 1 to 35 (MGSPWNGSDGPEGAREPPWPALPPCDERRCSPFPL) the chain is on the extracellular side. N6 carries an N-linked (GlcNAc...) asparagine glycan. Residues 36–56 (GALVPVTAVCLCLFVVGVSGN) form a helical membrane-spanning segment. Residues 57–74 (VVTVMLIGRYRDMRTTTN) lie on the Cytoplasmic side of the membrane. Residues 75–94 (LYLGSMAVSDLLILLGLPFD) form a helical membrane-spanning segment. Residues 95–112 (LYRLWRSRPWVFGPLLCR) lie on the Extracellular side of the membrane. Cysteines 111 and 235 form a disulfide. Residues 113-134 (LSLYVGEGCTYATLLHMTALSV) form a helical membrane-spanning segment. Residues 135-157 (ERYLAICRPLRARVLVTRRRVRA) lie on the Cytoplasmic side of the membrane. The helical transmembrane segment at 158-178 (LIAVLWAVALLSAGPFLFLVG) threads the bilayer. Residues 179–246 (VEQDPGISVV…PSPAQLGALR (68 aa)) lie on the Extracellular side of the membrane. The N-linked (GlcNAc...) asparagine glycan is linked to N192. The helical transmembrane segment at 247–270 (VMLWVTTAYFFLPFLCLSILYGLI) threads the bilayer. The Cytoplasmic segment spans residues 271 to 298 (GRELWSSRRPLRGPAASGRERGHRQTVR). Residues 299-320 (VLLVVVLAFIICWLPFHVGRII) form a helical membrane-spanning segment. The Extracellular segment spans residues 321–334 (YINTEDSRMMYFSQ). A helical membrane pass occupies residues 335 to 358 (YFNIVALQLFYLSASINPILYNLI). Over 359-412 (SKKYRAAAFKLLLARKSRPRGFHRSRDTAGEVAGDTGGDTVGYTETSANVKTMG) the chain is Cytoplasmic.

This sequence belongs to the G-protein coupled receptor 1 family. As to expression, expressed only in thyroid, stomach, and bone marrow.

It is found in the cell membrane. In terms of biological role, receptor for motilin. This chain is Motilin receptor (MLNR), found in Homo sapiens (Human).